The chain runs to 819 residues: Metabotropic glutamate receptor-like protein O (819 aa).

The signal sequence occupies residues 1–19 (MKKVFFLILILNCVVGALS). Over 20–394 (NKNICKISLL…FVDSYSNSIK (375 aa)) the chain is Extracellular. N99, N185, N277, N295, N330, and N370 each carry an N-linked (GlcNAc...) asparagine glycan. The chain crosses the membrane as a helical span at residues 395-415 (ISILSVSIFCIFICVLGMIFI). At 416 to 428 (TVLRNARILKSSS) the chain is on the cytoplasmic side. The helical transmembrane segment at 429–449 (PSFLLLILFGCIVIFTGCILF) threads the bilayer. The Extracellular portion of the chain corresponds to 450–457 (SQPATDKT). Residues 458–478 (CQGRVWLLSIGYTIFLGSLLI) traverse the membrane as a helical segment. At 479-503 (KNWRVWLLFDNKKLRKRSITNWKLY) the chain is on the cytoplasmic side. The helical transmembrane segment at 504 to 524 (PWVAGILVVDVLILALWQGLG) threads the bilayer. Over 525-550 (DIKSESRIIGTSFYQYTNVCTNNDQG) the chain is Extracellular. The chain crosses the membrane as a helical span at residues 551 to 571 (SIALYILLAFHGLKLLGTCFI). Residues 572–587 (SFKIKLVDIEEFNESK) lie on the Cytoplasmic side of the membrane. Residues 588–608 (PITTSVFIILFCIFTIILLIA) form a helical membrane-spanning segment. Residues 609-624 (PSSSSSSASSPQPIAS) are Extracellular-facing. A helical transmembrane segment spans residues 625-645 (LETIICICSVTTTAISIGLLF). At 646-819 (GDKIYFITTQ…NNENEIISDT (174 aa)) the chain is on the cytoplasmic side. Residues 674–819 (KDCDDDDDDS…NNENEIISDT (146 aa)) form a disordered region. The segment covering 695-712 (NKNKNKNRNQSEKKKRPN) has biased composition (basic residues). The segment covering 726–739 (ESVVFNPPSNNDLT) has biased composition (polar residues). The span at 748 to 768 (GIKEGHGHDSENNDEYEHHED) shows a compositional bias: basic and acidic residues. The span at 769-798 (EDHEYEGEGEDEDHEDEYEVENDIEQEQEQ) shows a compositional bias: acidic residues. A compositionally biased stretch (low complexity) spans 799-808 (ESSNISISTK).

In the N-terminal section; belongs to the BMP lipoprotein family. This sequence in the C-terminal section; belongs to the G-protein coupled receptor 3 family. GABA-B receptor subfamily.

The protein localises to the membrane. This Dictyostelium discoideum (Social amoeba) protein is Metabotropic glutamate receptor-like protein O (grlO).